The primary structure comprises 333 residues: Squamosa promoter-binding-like protein 8 (333 aa).

The disordered stretch occupies residues 1 to 28 (MLDYEWDNPSSIVLSGDERNPDSDPTRS). Residues 16 to 25 (GDERNPDSDP) are compositionally biased toward basic and acidic residues. The sufficient and necessary for DNA binding stretch occupies residues 179-269 (MANSLSTPRC…RKCHQSASAT (91 aa)). The segment at 185 to 262 (TPRCQAEGCN…ADHNRRRRKC (78 aa)) adopts an SBP-type zinc-finger fold. Zn(2+) is bound by residues Cys188, Cys193, Cys210, His213, Cys229, Cys232, His236, and Cys248. The Bipartite nuclear localization signal signature appears at 245-261 (KRSCRKRLADHNRRRRK). Disordered regions lie at residues 254–303 (DHNR…TISL) and 314–333 (TASS…FSSG). Polar residues predominate over residues 264-284 (QSASATQDTGTGKTTPKSPND). Over residues 289–299 (ASSSPSSNAPP) the composition is skewed to low complexity.

Zn(2+) is required as a cofactor. Expressed in shoot apical region and early floral tissues. Transcripts levels increase in developing pollen sacs, and decrease in later stage of anther development. Strongly expressed in the placental region of the carpels.

It is found in the nucleus. It localises to the cytoplasm. Its function is as follows. Trans-acting factor that binds specifically to the consensus nucleotide sequence 5'-TNCGTACAA-3'. Binds specifically to the 5'-GTAC-3' core sequence. Involved in development and floral organogenesis. Required for ovule differentiation, pollen production, filament elongation, seed formation and siliques elongation. Also seems to play a role in the formation of trichomes on sepals. May positively modulate gibberellin (GA) signaling in flower. The sequence is that of Squamosa promoter-binding-like protein 8 (SPL8) from Arabidopsis thaliana (Mouse-ear cress).